Reading from the N-terminus, the 115-residue chain is Chorion protein S15 (115 aa).

Residues 1 to 18 (MKYLIVCVTLALFAYINA) form the signal peptide.

The protein belongs to the chorion protein S15/S18 family.

The protein localises to the secreted. Functionally, chorion membrane (egg shell) protein; plays a role in protecting the egg from the environment. This Drosophila melanogaster (Fruit fly) protein is Chorion protein S15 (Cp15).